The sequence spans 229 residues: Potassium/proton antiporter CemA (229 aa).

A run of 3 helical transmembrane segments spans residues 7-27 (FTPL…SFSV), 107-127 (ILHF…SILG), and 189-209 (IISG…KYWI).

Belongs to the CemA family.

Its subcellular location is the plastid. The protein resides in the chloroplast inner membrane. It carries out the reaction K(+)(in) + H(+)(out) = K(+)(out) + H(+)(in). Functionally, contributes to K(+)/H(+) antiport activity by supporting proton efflux to control proton extrusion and homeostasis in chloroplasts in a light-dependent manner to modulate photosynthesis. Prevents excessive induction of non-photochemical quenching (NPQ) under continuous-light conditions. Indirectly promotes efficient inorganic carbon uptake into chloroplasts. This is Potassium/proton antiporter CemA from Atropa belladonna (Belladonna).